A 489-amino-acid chain; its full sequence is Actin-related protein 4 (489 aa).

A disordered region spans residues 323–379 (KRTKPSGVNKSDKKVTPTEEKEQEAVSKSTSPAANSADTPNETGKRPLEEEKPPKEN). Basic and acidic residues predominate over residues 332 to 347 (KSDKKVTPTEEKEQEA). Residues 348–364 (VSKSTSPAANSADTPNE) are compositionally biased toward polar residues. A Phosphoserine modification is found at S349. The segment covering 365–379 (TGKRPLEEEKPPKEN) has biased composition (basic and acidic residues).

Belongs to the actin family. ARP4 subfamily. In terms of assembly, component of the NuA4 histone acetyltransferase complex composed of at least ACT1, ARP4, EAF3, EAF5, EAF6, EAF7, EPL1, ESA1, SWC4, TRA1, VID21, YAF9 and YNG2. Component of the chromatin-remodeling INO80 complex, at least composed of ARP4, ARP5, ARP8, RVB1, RVB2, TAF14, NHP10, IES1, IES3, IES4, IES6, ACT1, IES2, IES5 and INO80. Component of the SWR1 chromatin remodeling complex composed of at least ACT1, ARP4, RVB1, RVB2, ARP6, YAF9, VPS71, VPS72, SWC3, SWC4, SWC5, SWC7 and SWR1, and perhaps BDF1. Interacts with histones H4 (HHF1 and HHF2), H3 (HHT1 and HHT2) and H2A (HTA1 and HTA2).

The protein localises to the nucleus. Functionally, chromatin interaction component of the NuA4 histone acetyltransferase complex which is involved in transcriptional activation of selected genes principally by acetylation of nucleosomal histone H4 and H2A. The NuA4 complex is also involved in DNA repair. ARP4 recognizes H2AS128ph (gamma-H2A) and is required for NuA4 complex integrity. Component of the SWR1 complex which mediates the ATP-dependent exchange of histone H2A for the H2A variant HZT1 leading to transcriptional regulation of selected genes by chromatin remodeling. Component of the INO80 complex which remodels chromatin by shifting nucleosomes. Its ability to induce transcription of some phosphate-responsive genes is modulated by inositol polyphosphates. The INO80 complex is involved in DNA repair by associating to gamma-H2A as a response to DNA damage. This is Actin-related protein 4 (ARP4) from Saccharomyces cerevisiae (strain ATCC 204508 / S288c) (Baker's yeast).